We begin with the raw amino-acid sequence, 146 residues long: Leghemoglobin 2 (146 aa).

The region spanning 2–146 is the Globin domain; sequence GFTAQQDALV…LAAAIKKAMS (145 aa). Tyrosine 30 bears the Nitrated tyrosine mark. A heme b-binding site is contributed by serine 45. Serine 45 carries the post-translational modification Phosphoserine. O2 is bound at residue histidine 61. Heme b-binding residues include lysine 64, histidine 93, and lysine 96. Tyrosine 134 is modified (nitrated tyrosine).

The protein belongs to the plant globin family. Monomer. Post-translationally, nitrated in effective nodules and particularly in hypoxic conditions; this mechanism may play a protective role in the symbiosis by buffering toxic peroxynitrite NO(2)(-). Nitration level decrease during nodule senescence. Phosphorylation at Ser-45 disrupts the molecular environment of its porphyrin ring oxygen binding pocket, thus leading to a reduced oxygen consumption and to the delivery of oxygen O(2) to symbiosomes. As to expression, specifically and strongly expressed in root nodules and at low levels in seedlings.

The protein resides in the cytoplasm. It is found in the cytosol. The protein localises to the nucleus. Functionally, leghemoglobin that reversibly binds oxygen O(2) through a pentacoordinated heme iron. In root nodules, facilitates the diffusion of oxygen to the bacteroids while preventing the bacterial nitrogenase from being inactivated by buffering dioxygen, nitric oxide and carbon monoxide, and promoting the formation of reactive oxygen species (ROS, e.g. H(2)O(2)). This role is essential for symbiotic nitrogen fixation (SNF). In Lotus japonicus (Lotus corniculatus var. japonicus), this protein is Leghemoglobin 2.